A 506-amino-acid chain; its full sequence is Phase 2 flagellin (506 aa).

This sequence belongs to the bacterial flagellin family.

It localises to the secreted. The protein localises to the bacterial flagellum. In terms of biological role, flagellin is the subunit protein which polymerizes to form the filaments of bacterial flagella. The protein is Phase 2 flagellin (fljB) of Salmonella typhimurium (strain LT2 / SGSC1412 / ATCC 700720).